The sequence spans 38 residues: Large ribosomal subunit protein bL36 (38 aa).

It belongs to the bacterial ribosomal protein bL36 family.

The protein is Large ribosomal subunit protein bL36 of Thermotoga maritima (strain ATCC 43589 / DSM 3109 / JCM 10099 / NBRC 100826 / MSB8).